Here is a 183-residue protein sequence, read N- to C-terminus: SAGA-associated factor 11 homolog (183 aa).

The segment at 98–119 adopts an SGF11-type zinc-finger fold; the sequence is CSCPNCNRIVAASRFAPHLEKC. The interval 140 to 167 is disordered; sequence GGNYFGADEDDEDDADWSGEKRKKKIAP. Over residues 146 to 156 the composition is skewed to acidic residues; that stretch reads ADEDDEDDADW.

It belongs to the SGF11 family. As to quaternary structure, component of some SAGA transcription coactivator-HAT complexes. Within the SAGA complex, participates in a subcomplex of SAGA called the DUB module (deubiquitination module).

Its subcellular location is the nucleus. Component of the transcription regulatory histone acetylation (HAT) complex SAGA, a multiprotein complex that activates transcription by remodeling chromatin and mediating histone acetylation and deubiquitination. Within the SAGA complex, participates in a subcomplex that specifically deubiquitinates histone H2B. The SAGA complex is recruited to specific gene promoters by activators, where it is required for transcription. This chain is SAGA-associated factor 11 homolog, found in Culex quinquefasciatus (Southern house mosquito).